Here is a 302-residue protein sequence, read N- to C-terminus: Surfeit locus protein 4 homolog (302 aa).

Transmembrane regions (helical) follow at residues 95–115 (APLL…LVVF), 120–140 (AYAI…YGLI), 193–213 (VLLI…ISWT), 215–235 (ILVH…FKAK), 236–256 (FFAA…NSFW), and 271–291 (DFFQ…TGPG). The Di-lysine motif motif lies at 299 to 302 (KKIY).

This sequence belongs to the SURF4 family.

The protein localises to the endoplasmic reticulum membrane. This chain is Surfeit locus protein 4 homolog, found in Schizosaccharomyces pombe (strain 972 / ATCC 24843) (Fission yeast).